We begin with the raw amino-acid sequence, 233 residues long: Antilisterial bacteriocin subtilosin biosynthesis protein AlbG (233 aa).

5 helical membrane-spanning segments follow: residues 4-24 (STVF…FGWV), 46-66 (GLLA…LHYV), 116-136 (TYVM…FEIV), 145-165 (TPPI…LFYM), and 192-212 (IGWM…LAAI).

The protein resides in the cell membrane. Its function is as follows. Involved in the production of the bacteriocin subtilosin. This Bacillus subtilis protein is Antilisterial bacteriocin subtilosin biosynthesis protein AlbG (albG).